Consider the following 302-residue polypeptide: Oxygen-dependent coproporphyrinogen-III oxidase (302 aa).

Substrate is bound at residue S94. A divalent metal cation-binding residues include H98 and H108. H108 acts as the Proton donor in catalysis. Residue 110–112 coordinates substrate; it reads NVR. Residues H147 and H177 each contribute to the a divalent metal cation site. The important for dimerization stretch occupies residues 242–277; it reads YVEFNLVYDRGTLFGLQTGGRTESILMSMPPLVRWQ. Substrate is bound at residue 260–262; that stretch reads GGR.

Belongs to the aerobic coproporphyrinogen-III oxidase family. As to quaternary structure, homodimer. It depends on a divalent metal cation as a cofactor.

Its subcellular location is the cytoplasm. The catalysed reaction is coproporphyrinogen III + O2 + 2 H(+) = protoporphyrinogen IX + 2 CO2 + 2 H2O. The protein operates within porphyrin-containing compound metabolism; protoporphyrin-IX biosynthesis; protoporphyrinogen-IX from coproporphyrinogen-III (O2 route): step 1/1. In terms of biological role, involved in the heme biosynthesis. Catalyzes the aerobic oxidative decarboxylation of propionate groups of rings A and B of coproporphyrinogen-III to yield the vinyl groups in protoporphyrinogen-IX. In Shewanella baltica (strain OS155 / ATCC BAA-1091), this protein is Oxygen-dependent coproporphyrinogen-III oxidase.